A 178-amino-acid chain; its full sequence is Adenine phosphoribosyltransferase (178 aa).

The protein belongs to the purine/pyrimidine phosphoribosyltransferase family. As to quaternary structure, homodimer.

It localises to the cytoplasm. It carries out the reaction AMP + diphosphate = 5-phospho-alpha-D-ribose 1-diphosphate + adenine. It functions in the pathway purine metabolism; AMP biosynthesis via salvage pathway; AMP from adenine: step 1/1. Functionally, catalyzes a salvage reaction resulting in the formation of AMP, that is energically less costly than de novo synthesis. This Bacteroides fragilis (strain ATCC 25285 / DSM 2151 / CCUG 4856 / JCM 11019 / LMG 10263 / NCTC 9343 / Onslow / VPI 2553 / EN-2) protein is Adenine phosphoribosyltransferase.